The following is a 291-amino-acid chain: Elongation factor Ts (291 aa).

The interval 80–83 (TDFV) is involved in Mg(2+) ion dislocation from EF-Tu.

This sequence belongs to the EF-Ts family.

The protein localises to the cytoplasm. Functionally, associates with the EF-Tu.GDP complex and induces the exchange of GDP to GTP. It remains bound to the aminoacyl-tRNA.EF-Tu.GTP complex up to the GTP hydrolysis stage on the ribosome. The sequence is that of Elongation factor Ts from Acinetobacter baylyi (strain ATCC 33305 / BD413 / ADP1).